The chain runs to 416 residues: D-amino acid dehydrogenase 2 (416 aa).

Residue 5-19 (VCIIGAGVVGLATAY) coordinates FAD.

The protein belongs to the DadA oxidoreductase family. The cofactor is FAD.

It carries out the reaction a D-alpha-amino acid + A + H2O = a 2-oxocarboxylate + AH2 + NH4(+). Its function is as follows. Oxidative deamination of D-amino acids. This is D-amino acid dehydrogenase 2 (dadA2) from Pseudomonas aeruginosa (strain ATCC 15692 / DSM 22644 / CIP 104116 / JCM 14847 / LMG 12228 / 1C / PRS 101 / PAO1).